A 240-amino-acid chain; its full sequence is 26.7 kDa heat shock protein, chloroplastic (240 aa).

The N-terminal 43 residues, 1 to 43 (MAAPFALVSRVSPAARLPIRAAWRRARPTVGLPSSGRARQLAV), are a transit peptide targeting the chloroplast. Positions 59 to 84 (HVNQDGGNQQGNAVQRRPRRSSALDG) are disordered. In terms of domain architecture, sHSP spans 126-240 (LATGEVRMPW…ERKVIDVQVQ (115 aa)).

The protein belongs to the small heat shock protein (HSP20) family. May form oligomeric structures. Expressed in roots, stems, leaves, spikelets and embryos.

The protein resides in the plastid. Its subcellular location is the chloroplast. The protein is 26.7 kDa heat shock protein, chloroplastic (HSP26.7) of Oryza sativa subsp. japonica (Rice).